Here is a 156-residue protein sequence, read N- to C-terminus: Small ribosomal subunit protein uS7 (156 aa).

Belongs to the universal ribosomal protein uS7 family. As to quaternary structure, part of the 30S ribosomal subunit. Contacts proteins S9 and S11.

In terms of biological role, one of the primary rRNA binding proteins, it binds directly to 16S rRNA where it nucleates assembly of the head domain of the 30S subunit. Is located at the subunit interface close to the decoding center, probably blocks exit of the E-site tRNA. The protein is Small ribosomal subunit protein uS7 of Nitrosococcus oceani (strain ATCC 19707 / BCRC 17464 / JCM 30415 / NCIMB 11848 / C-107).